A 464-amino-acid chain; its full sequence is 3-isopropylmalate dehydratase large subunit (464 aa).

C337, C397, and C400 together coordinate [4Fe-4S] cluster.

This sequence belongs to the aconitase/IPM isomerase family. LeuC type 1 subfamily. In terms of assembly, heterodimer of LeuC and LeuD. The cofactor is [4Fe-4S] cluster.

It catalyses the reaction (2R,3S)-3-isopropylmalate = (2S)-2-isopropylmalate. It functions in the pathway amino-acid biosynthesis; L-leucine biosynthesis; L-leucine from 3-methyl-2-oxobutanoate: step 2/4. In terms of biological role, catalyzes the isomerization between 2-isopropylmalate and 3-isopropylmalate, via the formation of 2-isopropylmaleate. This chain is 3-isopropylmalate dehydratase large subunit, found in Bacillus cereus (strain AH187).